A 671-amino-acid chain; its full sequence is DNA ligase (671 aa).

Residues 32–36, 81–82, and Glu113 each bind NAD(+); these read DAEYD and SL. Lys115 functions as the N6-AMP-lysine intermediate in the catalytic mechanism. 4 residues coordinate NAD(+): Arg136, Glu173, Lys290, and Lys314. Zn(2+)-binding residues include Cys408, Cys411, Cys426, and Cys432. The region spanning 593–671 is the BRCT domain; that stretch reads EIDSPFAGKT…EAEMIRLLGA (79 aa).

It belongs to the NAD-dependent DNA ligase family. LigA subfamily. Mg(2+) is required as a cofactor. Mn(2+) serves as cofactor.

It catalyses the reaction NAD(+) + (deoxyribonucleotide)n-3'-hydroxyl + 5'-phospho-(deoxyribonucleotide)m = (deoxyribonucleotide)n+m + AMP + beta-nicotinamide D-nucleotide.. In terms of biological role, DNA ligase that catalyzes the formation of phosphodiester linkages between 5'-phosphoryl and 3'-hydroxyl groups in double-stranded DNA using NAD as a coenzyme and as the energy source for the reaction. It is essential for DNA replication and repair of damaged DNA. The sequence is that of DNA ligase from Salmonella choleraesuis (strain SC-B67).